Reading from the N-terminus, the 283-residue chain is Galactooligosaccharides transport system permease protein GanQ (283 aa).

6 helical membrane passes run 13–33 (LLFS…PLLW), 82–102 (ISLF…YAFS), 115–135 (LFLL…FVLA), 137–157 (ILGM…GLIP), 188–208 (IFFQ…AMNG), and 248–268 (TTFA…FIML). An ABC transmembrane type-1 domain is found at 76–268 (YVNSMKISLF…IPVAVIFIML (193 aa)).

It belongs to the binding-protein-dependent transport system permease family. In terms of assembly, the complex is composed of two ATP-binding proteins (MsmX), two transmembrane proteins (GanP and GanQ) and a solute-binding protein (GanS).

It is found in the cell membrane. Involved in galactan degradation. Part of the ABC transporter complex GanPQS involved in the uptake of galactooligosaccharides. Responsible for the translocation of the substrate across the membrane. The chain is Galactooligosaccharides transport system permease protein GanQ (ganQ) from Bacillus subtilis (strain 168).